We begin with the raw amino-acid sequence, 200 residues long: Phospholipase A2 inhibitor gamma subunit B (200 aa).

Positions 1 to 19 are cleaved as a signal peptide; that stretch reads MKFLLFCCLFGTFLATGMC. 8 disulfides stabilise this stretch: cysteine 22/cysteine 46, cysteine 25/cysteine 32, cysteine 39/cysteine 67, cysteine 73/cysteine 94, cysteine 95/cysteine 100, cysteine 120/cysteine 145, cysteine 138/cysteine 165, and cysteine 171/cysteine 191. Asparagine 31 is a glycosylation site (N-linked (GlcNAc...) asparagine).

This sequence belongs to the CNF-like-inhibitor family. As to quaternary structure, heterodimer of subunit A and subunit B. In terms of processing, N-glycosylated. Expressed by the liver. Not expressed in esophagus, stomach, pancreas, spleen, gall bladder, small intestine, rectum, kidney, trachea, lung, testis and body fat.

It is found in the secreted. In terms of biological role, inhibits the enzymatic activity of phospholipase A2 (PA2). In Elaphe quadrivirgata (Japanese four-lined ratsnake), this protein is Phospholipase A2 inhibitor gamma subunit B.